A 330-amino-acid polypeptide reads, in one-letter code: Exostosin-like 2 (330 aa).

The Cytoplasmic segment spans residues 1–22 (MRCCHICKLPGRVMGIRVLRLS). A helical; Signal-anchor for type II membrane protein transmembrane segment spans residues 23-43 (LVVILVLLLVAGALTALLPSV). The Lumenal portion of the chain corresponds to 44 to 330 (KEDKMLMLRR…FPYANYKRKI (287 aa)). UDP-N-acetyl-alpha-D-galactosamine is bound at residue Gln-71. Gln-71 contacts UDP-N-acetyl-alpha-D-glucosamine. N-linked (GlcNAc...) asparagine glycosylation occurs at Asn-74. UDP-N-acetyl-alpha-D-galactosamine-binding residues include Arg-75, Asn-100, Asn-129, Arg-134, Asp-150, Asp-151, Asp-152, and Asp-244. The UDP-N-acetyl-alpha-D-glucosamine site is built by Arg-75, Asn-100, Asn-129, Arg-134, Asp-150, Asp-151, Asp-152, Asp-244, Asp-245, and Arg-293. Residue Asp-152 participates in Mn(2+) binding. Cys-243 and Cys-296 are joined by a disulfide. The active site involves Asp-245. Arg-293 contributes to the UDP-N-acetyl-alpha-D-galactosamine binding site.

The protein belongs to the glycosyltransferase 47 family. Mn(2+) serves as cofactor. In terms of processing, the soluble form derives from the membrane form by proteolytic processing. In terms of tissue distribution, ubiquitous.

It is found in the endoplasmic reticulum membrane. The protein localises to the secreted. The enzyme catalyses 3-O-(beta-D-GlcA-(1-&gt;3)-beta-D-Gal-(1-&gt;3)-beta-D-Gal-(1-&gt;4)-beta-D-Xyl)-L-seryl-[protein] + UDP-N-acetyl-alpha-D-glucosamine = 3-O-(alpha-D-GlcNAc-(1-&gt;4)-beta-D-GlcA-(1-&gt;3)-beta-D-Gal-(1-&gt;3)-beta-D-Gal-(1-&gt;4)-beta-D-Xyl)-L-seryl-[protein] + UDP + H(+). The protein operates within glycan metabolism; heparan sulfate biosynthesis. Its function is as follows. Glycosyltransferase required for the biosynthesis of heparan-sulfate and responsible for the alternating addition of beta-1-4-linked glucuronic acid (GlcA) and alpha-1-4-linked N-acetylglucosamine (GlcNAc) units to nascent heparan sulfate chains. The chain is Exostosin-like 2 (EXTL2) from Homo sapiens (Human).